Reading from the N-terminus, the 232-residue chain is Large ribosomal subunit protein uL1 (232 aa).

This sequence belongs to the universal ribosomal protein uL1 family. In terms of assembly, part of the 50S ribosomal subunit.

Binds directly to 23S rRNA. The L1 stalk is quite mobile in the ribosome, and is involved in E site tRNA release. Functionally, protein L1 is also a translational repressor protein, it controls the translation of the L11 operon by binding to its mRNA. This chain is Large ribosomal subunit protein uL1, found in Xylella fastidiosa (strain 9a5c).